Here is a 650-residue protein sequence, read N- to C-terminus: Putative secretin GspD (650 aa).

Residues 1 to 23 form the signal peptide; sequence MKGLNKITCCLLAALLMPCAGHA. An N0 region spans residues 24–122; sequence ENEQYGANFN…IADSSRPGVG (99 aa). Residues 124 to 188 form an N1 region; the sequence is ELVTRIVPLE…EVIKRVDVIG (65 aa). The tract at residues 189 to 263 is N2; that stretch reads TEKQQIIHLE…LLKSLDVEES (75 aa). Positions 266 to 342 are N3; sequence GNTRVYYLKY…KLATVIARLD (77 aa). The secretin stretch occupies residues 345–596; the sequence is RAQVLVEAII…VFIRPTIIRD (252 aa). The interval 598–650 is s domain; that stretch reads DVYRSLSKEKYTRYRQEQQQRIDGKSKALVGSEDLPVLDENTFNSHAPAPSSR.

It belongs to the bacterial secretin family. GSP D subfamily. In terms of assembly, forms a cylindrical channel with 15 subunits; approximately 25% of the particles have 16-subunit channels. Closed pentadeacameric channels are 180 Angstroms long and 145 Angstroms in diameter. Each subunit turns in a clock-wise manner around the channel.

Its subcellular location is the cell outer membrane. Its function is as follows. Involved in a type II secretion system (T2SS, formerly general secretion pathway, GSP) for the export of folded proteins across the outer membrane. This subunit would form the outer membrane channel. The sequence is that of Putative secretin GspD (gspD) from Escherichia coli (strain K12).